Reading from the N-terminus, the 494-residue chain is UPF0371 protein SEQ_1471 (494 aa).

This sequence belongs to the UPF0371 family.

This is UPF0371 protein SEQ_1471 from Streptococcus equi subsp. equi (strain 4047).